We begin with the raw amino-acid sequence, 156 residues long: Phosphoribosyl-AMP cyclohydrolase (156 aa).

Mg(2+) is bound at residue Asp-106. Position 107 (Cys-107) interacts with Zn(2+). The Mg(2+) site is built by Asp-108 and Asp-110. Zn(2+) is bound by residues Cys-123 and Cys-130.

It belongs to the PRA-CH family. In terms of assembly, homodimer. Mg(2+) is required as a cofactor. Requires Zn(2+) as cofactor.

The protein resides in the cytoplasm. It catalyses the reaction 1-(5-phospho-beta-D-ribosyl)-5'-AMP + H2O = 1-(5-phospho-beta-D-ribosyl)-5-[(5-phospho-beta-D-ribosylamino)methylideneamino]imidazole-4-carboxamide. It participates in amino-acid biosynthesis; L-histidine biosynthesis; L-histidine from 5-phospho-alpha-D-ribose 1-diphosphate: step 3/9. Functionally, catalyzes the hydrolysis of the adenine ring of phosphoribosyl-AMP. This Gluconobacter oxydans (strain 621H) (Gluconobacter suboxydans) protein is Phosphoribosyl-AMP cyclohydrolase.